Here is a 341-residue protein sequence, read N- to C-terminus: Tryptophan--tRNA ligase (341 aa).

ATP-binding positions include 11-13 and 19-20; these read RPT and GH. Positions 12–20 match the 'HIGH' region motif; the sequence is PTGKLHIGH. Asp140 lines the L-tryptophan pocket. Residues 152 to 154, Leu193, and 201 to 205 each bind ATP; these read GED and KMSKS. Positions 201 to 205 match the 'KMSKS' region motif; it reads KMSKS.

It belongs to the class-I aminoacyl-tRNA synthetase family. Homodimer.

It is found in the cytoplasm. It carries out the reaction tRNA(Trp) + L-tryptophan + ATP = L-tryptophyl-tRNA(Trp) + AMP + diphosphate + H(+). Its function is as follows. Catalyzes the attachment of tryptophan to tRNA(Trp). The protein is Tryptophan--tRNA ligase of Clostridium longisporum.